The following is a 446-amino-acid chain: Phosphoglucosamine mutase (446 aa).

Ser103 functions as the Phosphoserine intermediate in the catalytic mechanism. Mg(2+) contacts are provided by Ser103, Asp242, Asp244, and Asp246. Ser103 carries the phosphoserine modification.

This sequence belongs to the phosphohexose mutase family. Requires Mg(2+) as cofactor. Activated by phosphorylation.

It catalyses the reaction alpha-D-glucosamine 1-phosphate = D-glucosamine 6-phosphate. Functionally, catalyzes the conversion of glucosamine-6-phosphate to glucosamine-1-phosphate. This Vibrio vulnificus (strain YJ016) protein is Phosphoglucosamine mutase.